The following is a 142-amino-acid chain: Large ribosomal subunit protein uL11 (142 aa).

The protein belongs to the universal ribosomal protein uL11 family. Part of the ribosomal stalk of the 50S ribosomal subunit. Interacts with L10 and the large rRNA to form the base of the stalk. L10 forms an elongated spine to which L12 dimers bind in a sequential fashion forming a multimeric L10(L12)X complex. One or more lysine residues are methylated.

In terms of biological role, forms part of the ribosomal stalk which helps the ribosome interact with GTP-bound translation factors. The sequence is that of Large ribosomal subunit protein uL11 from Idiomarina loihiensis (strain ATCC BAA-735 / DSM 15497 / L2-TR).